A 219-amino-acid polypeptide reads, in one-letter code: RNA-3 uncharacterized 24.7 kDa protein (219 aa).

The protein is RNA-3 uncharacterized 24.7 kDa protein of Beta macrocarpa (Beet).